A 166-amino-acid chain; its full sequence is Urocortin-3 (166 aa).

The signal sequence occupies residues 1-23 (MLVPAPFLLVLLLLLGAPQVGLS). The propeptide occupies 24 to 123 (QRSPKAGSSP…QDKAKSDRRT (100 aa)). Basic and acidic residues predominate over residues 41–51 (REAEKSQRKDT). A disordered region spans residues 41–123 (REAEKSQRKD…QDKAKSDRRT (83 aa)). Over residues 68 to 77 (EDQEGQEEED) the composition is skewed to acidic residues. Residues 86–96 (SVGGGGGGGAG) show a composition bias toward gly residues. A compositionally biased stretch (basic and acidic residues) spans 113 to 123 (SQDKAKSDRRT). An Isoleucine amide modification is found at isoleucine 162.

The protein belongs to the sauvagine/corticotropin-releasing factor/urotensin I family. As to quaternary structure, binds with high affinity to CRF receptors 2-alpha and 2-beta.

It localises to the secreted. Its function is as follows. Suppresses food intake, delays gastric emptying and decreases heat-induced edema. Might represent an endogenous ligand for maintaining homeostasis after stress. The chain is Urocortin-3 (UCN3) from Bos taurus (Bovine).